We begin with the raw amino-acid sequence, 469 residues long: Glutamate--tRNA ligase (469 aa).

A 'HIGH' region motif is present at residues 11 to 21 (PSPTGFIHLGN). Residues 114–131 (QREAGEKPRYDGTWRPEP) show a composition bias toward basic and acidic residues. A disordered region spans residues 114–139 (QREAGEKPRYDGTWRPEPGKVLPEPP). A 'KMSKS' region motif is present at residues 243-247 (KMSKR). K246 provides a ligand contact to ATP.

This sequence belongs to the class-I aminoacyl-tRNA synthetase family. Glutamate--tRNA ligase type 1 subfamily. As to quaternary structure, monomer.

The protein localises to the cytoplasm. It carries out the reaction tRNA(Glu) + L-glutamate + ATP = L-glutamyl-tRNA(Glu) + AMP + diphosphate. Its function is as follows. Catalyzes the attachment of glutamate to tRNA(Glu) in a two-step reaction: glutamate is first activated by ATP to form Glu-AMP and then transferred to the acceptor end of tRNA(Glu). The protein is Glutamate--tRNA ligase of Paraburkholderia xenovorans (strain LB400).